Reading from the N-terminus, the 642-residue chain is Dihydrolipoyllysine-residue acetyltransferase component of pyruvate dehydrogenase complex, mitochondrial (642 aa).

The N-terminal 85 residues, 1 to 85, are a transit peptide targeting the mitochondrion; sequence MWRVCARRAR…LLGSPSRRSY (85 aa). The interval 80–99 is disordered; that stretch reads PSRRSYSLPPHQKVPLPSLS. 2 consecutive Lipoyl-binding domains span residues 90–166 and 217–293; these read HQKV…CITV and HMQI…CIIV. Ser99 carries the post-translational modification Phosphoserine. 2 positions are modified to N6-lipoyllysine: Lys131 and Lys258. The tract at residues 313–346 is disordered; that stretch reads LKPQAAPPAPPPVAAVPPTPQPVAPTPSAAPAGP. Residues 317–337 show a composition bias toward pro residues; it reads AAPPAPPPVAAVPPTPQPVAP. Residues 351 to 388 enclose the Peripheral subunit-binding (PSBD) domain; it reads FVSPLAKKLAAEKGIDLTQVKGTGPEGRIIKKDIDSFV. A CoA-binding site is contributed by Arg456. Lys461 is subject to N6-acetyllysine. Lys468 is subject to N6-succinyllysine. A CoA-binding site is contributed by Ser470. The residue at position 542 (Lys542) is an N6-succinyllysine. Residues Ser561, Asn562, and Gly586 each contribute to the CoA site. Active-site residues include His615 and Asp619.

It belongs to the 2-oxoacid dehydrogenase family. As to quaternary structure, part of the pyruvate dehydrogenase complex (PDHc) that is a multi-enzyme complex composed of multiple copies of three enzymes, pyruvate dehydrogenase (subunits PDH1A and PDHB, E1 component), dihydrolipoamide acetyltransferase (DLAT, E2 component), and dihydrolipoamide dehydrogenase (DLD, E3 component) to which is added an additional protein the E3-binding protein (PDHX, E3BP). In terms of structural architecture, the E2 and E3BP components assemble into a 60meric central core with icosahedral symmetry. The central core is decorated with E1 and E3 proteins. Currently, two alternative models for the E2:E3BP stoichiometry are considered as being either 48:12 (E2(48)-E3BP(12)) or 40:20 (E2(40)-E3BP(20)). Interacts with PDK2 and PDK3. Interacts with SIRT4. Interacts with PDHB. Requires (R)-lipoate as cofactor. In terms of processing, delipoylated at Lys-131 and Lys-258 by SIRT4, delipoylation decreases the PHD complex activity.

Its subcellular location is the mitochondrion matrix. It catalyses the reaction N(6)-[(R)-dihydrolipoyl]-L-lysyl-[protein] + acetyl-CoA = N(6)-[(R)-S(8)-acetyldihydrolipoyl]-L-lysyl-[protein] + CoA. Its function is as follows. As part of the pyruvate dehydrogenase complex, catalyzes the transfers of an acetyl group to a lipoic acid moiety. The pyruvate dehydrogenase complex, catalyzes the overall conversion of pyruvate to acetyl-CoA and CO(2), and thereby links cytoplasmic glycolysis and the mitochondrial tricarboxylic acid (TCA) cycle. The protein is Dihydrolipoyllysine-residue acetyltransferase component of pyruvate dehydrogenase complex, mitochondrial of Mus musculus (Mouse).